The following is a 533-amino-acid chain: Probable ADP-ribosylation factor-binding protein C25H2.16c (533 aa).

In terms of domain architecture, VHS spans 15-151; sequence ATEPYAFEPD…LLSYKGYTFP (137 aa). One can recognise a GAT domain in the interval 178-305; the sequence is REAMSAKLQE…LLTQYDHLLE (128 aa). Ser320 is modified (phosphoserine). The region spanning 417-532 is the GAE domain; it reads NNFTSTCAFE…EYTGQSSIRL (116 aa).

It belongs to the GGA protein family.

The protein resides in the golgi apparatus. It localises to the trans-Golgi network. In terms of biological role, may play a role in the regulation of membrane traffic through the trans-Golgi network. This is Probable ADP-ribosylation factor-binding protein C25H2.16c from Schizosaccharomyces pombe (strain 972 / ATCC 24843) (Fission yeast).